Consider the following 359-residue polypeptide: Serpentine receptor class epsilon-33 (359 aa).

Transmembrane regions (helical) follow at residues 29–49, 65–85, 134–156, 168–188, 194–214, 255–275, and 285–305; these read VIISILELMIYLVCIHLVNVS, ILALPMFGMWYELIIGKFITI, YMYSWIFGVLTVAVERVIASVLI, PAILLIISQFLSISMAFGLLF, LSAHFPWMISCPISVAAYVFV, LVFAVLSFIGICGCGIAALHY, and LIENVLFLNPFLIGLTAMLSI.

The protein belongs to the nematode receptor-like protein sre family.

The protein resides in the membrane. The protein is Serpentine receptor class epsilon-33 (sre-33) of Caenorhabditis elegans.